Here is a 445-residue protein sequence, read N- to C-terminus: uncharacterized protein (445 aa).

Residues 139–160 (TESQKDLEYERKANKTKEENQQ) form a disordered region.

This is an uncharacterized protein from Mycoplasma pneumoniae (strain ATCC 29342 / M129 / Subtype 1) (Mycoplasmoides pneumoniae).